Reading from the N-terminus, the 337-residue chain is Glyceraldehyde-3-phosphate dehydrogenase (337 aa).

Residues 12–13, Asp34, and Lys79 contribute to the NAD(+) site; that span reads RI. Residues 150–152, Thr181, 210–211, and Arg233 contribute to the D-glyceraldehyde 3-phosphate site; these read SCT and TG. Catalysis depends on Cys151, which acts as the Nucleophile. Asn315 is an NAD(+) binding site.

This sequence belongs to the glyceraldehyde-3-phosphate dehydrogenase family. As to quaternary structure, homotetramer.

The protein localises to the cytoplasm. It carries out the reaction D-glyceraldehyde 3-phosphate + phosphate + NAD(+) = (2R)-3-phospho-glyceroyl phosphate + NADH + H(+). It participates in carbohydrate degradation; glycolysis; pyruvate from D-glyceraldehyde 3-phosphate: step 1/5. This is Glyceraldehyde-3-phosphate dehydrogenase (GPD) from Cochliobolus lunatus (Filamentous fungus).